The following is a 740-amino-acid chain: Ribosome-releasing factor 2, mitochondrial (740 aa).

The N-terminal 29 residues, M1–Y29, are a transit peptide targeting the mitochondrion. The 280-residue stretch at S31–E310 folds into the tr-type G domain. GTP contacts are provided by residues A40–T47, D104–H108, and N158–D161.

It belongs to the TRAFAC class translation factor GTPase superfamily. Classic translation factor GTPase family. EF-G/EF-2 subfamily.

The protein resides in the mitochondrion. Its function is as follows. Mitochondrial GTPase that mediates the disassembly of ribosomes from messenger RNA at the termination of mitochondrial protein biosynthesis. Not involved in the GTP-dependent ribosomal translocation step during translation elongation. This Drosophila melanogaster (Fruit fly) protein is Ribosome-releasing factor 2, mitochondrial.